The sequence spans 1437 residues: Histone-lysine N-methyltransferase NSD3 (1437 aa).

Disordered stretches follow at residues 121–157 (PHEI…KLKI) and 181–252 (QASE…PVQP). Pro residues predominate over residues 128 to 139 (PSPPQPPPPPSV). At Ser150 the chain carries Phosphoserine. Positions 154–157 (KLKI) match the KIKL motif. The span at 187 to 201 (KSKHESRKEKRKKSN) shows a compositional bias: basic residues. A compositionally biased stretch (basic and acidic residues) spans 202–248 (KHDSSRSEERKSHKIPKLEPEEQNRPNERVDTVSEKPREEPVLKEEA). Glycyl lysine isopeptide (Lys-Gly) (interchain with G-Cter in SUMO2) cross-links involve residues Lys218 and Lys245. Positions 270–333 (VGDLVWSKVG…EKRVREYKGH (64 aa)) constitute a PWWP 1 domain. Disordered regions lie at residues 344–365 (TKQA…QRER) and 406–465 (AKKS…EPPP). Residue Lys413 forms a Glycyl lysine isopeptide (Lys-Gly) (interchain with G-Cter in SUMO2) linkage. Over residues 425–445 (VLNTQPEQTNAGEVASSLSST) the composition is skewed to polar residues. Phosphoserine is present on Ser457. Residues Lys502 and Lys532 each participate in a glycyl lysine isopeptide (Lys-Gly) (interchain with G-Cter in SUMO2) cross-link. Residues 540-696 (QDRLIISTPN…DSSLSRRGTG (157 aa)) are disordered. Residues 546 to 571 (STPNQRNEKPTQSVSSPEATSGSTGS) are compositionally biased toward polar residues. Positions 583-595 (TRSESEKSTEVVP) are enriched in basic and acidic residues. Phosphoserine occurs at positions 585, 587, and 590. Residue Lys628 forms a Glycyl lysine isopeptide (Lys-Gly) (interchain with G-Cter in SUMO2) linkage. The residue at position 655 (Ser655) is a Phosphoserine. The span at 682–692 (DVQSMDSSLSR) shows a compositional bias: polar residues. 3 PHD-type zinc fingers span residues 701–748 (DTVC…CKTG), 749–805 (QHPC…CSME), and 862–955 (VGFC…CKAG). Lys790 is subject to N6-acetyllysine. Residues 960–1022 (YKQIVWVKLG…QGRVFPYVEG (63 aa)) form the PWWP 2 domain. The stretch at 1033-1069 (INKTFKKALEEAAKRFQELKAQRESKEALEIEKNSRK) forms a coiled coil. An AWS domain is found at 1093-1143 (SEIPRCNCKPADENPCGLESECLNRMLQYECHPQVCPAGDRCQNQCFTKRL). Residues 1145–1262 (PDAEIIKTER…AGMELTFNYN (118 aa)) enclose the SET domain. Lys1151 is covalently cross-linked (Glycyl lysine isopeptide (Lys-Gly) (interchain with G-Cter in SUMO2)). The region spanning 1269-1285 (GRTECHCGADNCSGFLG) is the Post-SET domain. The PHD-type 4; atypical zinc finger occupies 1321–1368 (EDYCFQCGDGGELVMCDKKDCPKAYHLLCLNLTQPPYGKWECPWHQCD).

Belongs to the class V-like SAM-binding methyltransferase superfamily. Histone-lysine methyltransferase family. SET2 subfamily. Interacts with BRD4. Interacts (via KIKL motif) with BRD3 (via NET domain). As to expression, highly expressed in brain, heart and skeletal muscle. Expressed at lower level in liver and lung.

It localises to the nucleus. The protein localises to the chromosome. The enzyme catalyses L-lysyl(4)-[histone H3] + 2 S-adenosyl-L-methionine = N(6),N(6)-dimethyl-L-lysyl(4)-[histone H3] + 2 S-adenosyl-L-homocysteine + 2 H(+). The catalysed reaction is L-lysyl(27)-[histone H3] + 2 S-adenosyl-L-methionine = N(6),N(6)-dimethyl-L-lysyl(27)-[histone H3] + 2 S-adenosyl-L-homocysteine + 2 H(+). In terms of biological role, histone methyltransferase. Preferentially dimethylates 'Lys-4' and 'Lys-27' of histone H3 forming H3K4me2 and H3K27me2. H3 'Lys-4' methylation represents a specific tag for epigenetic transcriptional activation, while 'Lys-27' is a mark for transcriptional repression. This is Histone-lysine N-methyltransferase NSD3 from Homo sapiens (Human).